A 243-amino-acid chain; its full sequence is 2-O-methyltransferase NoeI (243 aa).

Belongs to the FkbM methyltransferase family.

The protein localises to the cytoplasm. Required for 2-O-methylation of the fucosyl group of Nod factors. In Sinorhizobium fredii (strain NBRC 101917 / NGR234), this protein is 2-O-methyltransferase NoeI (noeI).